The sequence spans 275 residues: Putative pyruvate, phosphate dikinase regulatory protein (275 aa).

151–158 (GVSRTSKT) lines the ADP pocket.

This sequence belongs to the pyruvate, phosphate/water dikinase regulatory protein family. PDRP subfamily.

It catalyses the reaction N(tele)-phospho-L-histidyl/L-threonyl-[pyruvate, phosphate dikinase] + ADP = N(tele)-phospho-L-histidyl/O-phospho-L-threonyl-[pyruvate, phosphate dikinase] + AMP + H(+). It carries out the reaction N(tele)-phospho-L-histidyl/O-phospho-L-threonyl-[pyruvate, phosphate dikinase] + phosphate + H(+) = N(tele)-phospho-L-histidyl/L-threonyl-[pyruvate, phosphate dikinase] + diphosphate. In terms of biological role, bifunctional serine/threonine kinase and phosphorylase involved in the regulation of the pyruvate, phosphate dikinase (PPDK) by catalyzing its phosphorylation/dephosphorylation. In Rhodospirillum rubrum (strain ATCC 11170 / ATH 1.1.1 / DSM 467 / LMG 4362 / NCIMB 8255 / S1), this protein is Putative pyruvate, phosphate dikinase regulatory protein.